Here is a 191-residue protein sequence, read N- to C-terminus: Leucyl/phenylalanyl-tRNA--protein transferase (191 aa).

This sequence belongs to the L/F-transferase family.

It localises to the cytoplasm. The enzyme catalyses N-terminal L-lysyl-[protein] + L-leucyl-tRNA(Leu) = N-terminal L-leucyl-L-lysyl-[protein] + tRNA(Leu) + H(+). It catalyses the reaction N-terminal L-arginyl-[protein] + L-leucyl-tRNA(Leu) = N-terminal L-leucyl-L-arginyl-[protein] + tRNA(Leu) + H(+). The catalysed reaction is L-phenylalanyl-tRNA(Phe) + an N-terminal L-alpha-aminoacyl-[protein] = an N-terminal L-phenylalanyl-L-alpha-aminoacyl-[protein] + tRNA(Phe). In terms of biological role, functions in the N-end rule pathway of protein degradation where it conjugates Leu, Phe and, less efficiently, Met from aminoacyl-tRNAs to the N-termini of proteins containing an N-terminal arginine or lysine. The protein is Leucyl/phenylalanyl-tRNA--protein transferase of Nostoc sp. (strain PCC 7120 / SAG 25.82 / UTEX 2576).